A 130-amino-acid chain; its full sequence is Small ribosomal subunit protein uS9 (130 aa).

This sequence belongs to the universal ribosomal protein uS9 family.

In Bacillus cytotoxicus (strain DSM 22905 / CIP 110041 / 391-98 / NVH 391-98), this protein is Small ribosomal subunit protein uS9.